A 1485-amino-acid polypeptide reads, in one-letter code: Cystic fibrosis transmembrane conductance regulator (1485 aa).

At M1–Y78 the chain is on the cytoplasmic side. A helical transmembrane segment spans residues I79–Q99. The 271-residue stretch at L83–R353 folds into the ABC transmembrane type-1 1 domain. Residues P100–F123 lie on the Extracellular side of the membrane. A helical membrane pass occupies residues L124–L149. Over G150–S195 the chain is Cytoplasmic. Residues L196 to I216 traverse the membrane as a helical segment. The Extracellular portion of the chain corresponds to W217–S224. A helical membrane pass occupies residues F225 to M245. Residues G246–K299 are Cytoplasmic-facing. Residues I300–V320 form a helical membrane-spanning segment. Over A321 to T340 the chain is Extracellular. Residues L341–Y363 form a helical membrane-spanning segment. The Cytoplasmic segment spans residues D364 to S856. Residues W402, G457–S464, and Q492 each bind ATP. An ABC transporter 1 domain is found at N424 to G645. The interval S653–A826 is disordered R region. The chain crosses the membrane as a helical span at residues L857 to A877. One can recognise an ABC transmembrane type-1 2 domain in the interval V860 to G1163. At G878 to L924 the chain is on the extracellular side. 2 N-linked (GlcNAc...) asparagine glycosylation sites follow: N897 and N903. Residues Y925–V946 traverse the membrane as a discontinuously helical segment. At H947–P996 the chain is on the cytoplasmic side. A helical membrane pass occupies residues L997–V1019. At R1020–P1021 the chain is on the extracellular side. The helical transmembrane segment at Y1022 to L1042 threads the bilayer. At R1043–T1103 the chain is on the cytoplasmic side. Residues L1104–W1124 traverse the membrane as a helical segment. Residues I1125 to G1138 are Extracellular-facing. A helical membrane pass occupies residues I1139 to I1159. Topologically, residues A1160–L1485 are cytoplasmic. Residues I1211–P1444 enclose the ABC transporter 2 domain. ATP is bound by residues Y1220 and G1245 to S1252. The interval P1452 to L1485 is disordered. Residues R1454–Q1473 are compositionally biased toward polar residues. Residues E1474–L1485 show a composition bias toward acidic residues. Residues T1483–L1485 carry the PDZ-binding motif.

It belongs to the ABC transporter superfamily. ABCC family. CFTR transporter (TC 3.A.1.202) subfamily. As to quaternary structure, monomer; does not require oligomerization for channel activity. Interacts with cse1l; this interaction may down-regulate cftr activity. Phosphorylated; this activates the channel. Dephosphorylation strongly decreases ATPase activity. Phosphorylation at PKA sites activates the channel. Phosphorylation at PKC sites enhances the response to phosphorylation by PKA. In terms of tissue distribution, detected in gut epithelium (at protein level). Detected in kidney, spleen, intestine and liver. Detected in pancreatic duct epithelium at 5 dpf and throughout adult life.

The protein resides in the apical cell membrane. The protein localises to the early endosome membrane. Its subcellular location is the cell membrane. It is found in the recycling endosome membrane. It localises to the endoplasmic reticulum membrane. It carries out the reaction ATP + H2O + closed Cl(-) channel = ADP + phosphate + open Cl(-) channel.. The enzyme catalyses chloride(in) = chloride(out). It catalyses the reaction hydrogencarbonate(in) = hydrogencarbonate(out). The catalysed reaction is ATP + H2O = ADP + phosphate + H(+). Its function is as follows. Epithelial ion channel that plays an important role in the regulation of epithelial ion and water transport and fluid homeostasis. Mediates the transport of chloride ions across the cell membrane. Possesses an intrinsic ATPase activity and utilizes ATP to gate its channel; the passive flow of anions through the channel is gated by cycles of ATP binding and hydrolysis by the ATP-binding domains. The ion channel is also permeable to HCO(3)(-); selectivity depends on the extracellular chloride concentration. Exerts its function also by modulating the activity of other ion channels and transporters. Contributes to the regulation of the pH and the ion content of the epithelial fluid layer. Required for normal fluid homeostasis in the gut. Required for normal volume expansion and cell shape changes of Kupffer's vesicle during embryonic development and for normal establishment of left-right body patterning. Required for normal resistance to infection by P.aeruginosa strain PA14 and strain SMC573. In Danio rerio (Zebrafish), this protein is Cystic fibrosis transmembrane conductance regulator.